The following is a 288-amino-acid chain: 4-hydroxy-3-methylbut-2-enyl diphosphate reductase (288 aa).

C12 is a binding site for [4Fe-4S] cluster. Residues H42 and H77 each contribute to the (2E)-4-hydroxy-3-methylbut-2-enyl diphosphate site. 2 residues coordinate dimethylallyl diphosphate: H42 and H77. Isopentenyl diphosphate contacts are provided by H42 and H77. Residue C99 coordinates [4Fe-4S] cluster. Residue H127 participates in (2E)-4-hydroxy-3-methylbut-2-enyl diphosphate binding. H127 is a binding site for dimethylallyl diphosphate. Isopentenyl diphosphate is bound at residue H127. E129 functions as the Proton donor in the catalytic mechanism. Residue T165 coordinates (2E)-4-hydroxy-3-methylbut-2-enyl diphosphate. C193 provides a ligand contact to [4Fe-4S] cluster. S221, S222, N223, and S265 together coordinate (2E)-4-hydroxy-3-methylbut-2-enyl diphosphate. The dimethylallyl diphosphate site is built by S221, S222, N223, and S265. Isopentenyl diphosphate contacts are provided by S221, S222, N223, and S265.

It belongs to the IspH family. [4Fe-4S] cluster serves as cofactor.

It carries out the reaction isopentenyl diphosphate + 2 oxidized [2Fe-2S]-[ferredoxin] + H2O = (2E)-4-hydroxy-3-methylbut-2-enyl diphosphate + 2 reduced [2Fe-2S]-[ferredoxin] + 2 H(+). The enzyme catalyses dimethylallyl diphosphate + 2 oxidized [2Fe-2S]-[ferredoxin] + H2O = (2E)-4-hydroxy-3-methylbut-2-enyl diphosphate + 2 reduced [2Fe-2S]-[ferredoxin] + 2 H(+). Its pathway is isoprenoid biosynthesis; dimethylallyl diphosphate biosynthesis; dimethylallyl diphosphate from (2E)-4-hydroxy-3-methylbutenyl diphosphate: step 1/1. It participates in isoprenoid biosynthesis; isopentenyl diphosphate biosynthesis via DXP pathway; isopentenyl diphosphate from 1-deoxy-D-xylulose 5-phosphate: step 6/6. Functionally, catalyzes the conversion of 1-hydroxy-2-methyl-2-(E)-butenyl 4-diphosphate (HMBPP) into a mixture of isopentenyl diphosphate (IPP) and dimethylallyl diphosphate (DMAPP). Acts in the terminal step of the DOXP/MEP pathway for isoprenoid precursor biosynthesis. This is 4-hydroxy-3-methylbut-2-enyl diphosphate reductase from Thermoanaerobacter pseudethanolicus (strain ATCC 33223 / 39E) (Clostridium thermohydrosulfuricum).